We begin with the raw amino-acid sequence, 327 residues long: Metapyrocatechase (327 aa).

VOC domains are found at residues 14–126 (QLAH…IFFE) and 156–276 (RLDH…LFGD). 3 residues coordinate Fe cation: histidine 159, histidine 221, and glutamate 272.

It belongs to the extradiol ring-cleavage dioxygenase family. The cofactor is Fe(2+).

It catalyses the reaction catechol + O2 = (2Z,4E)-2-hydroxy-6-oxohexa-2,4-dienoate + H(+). The chain is Metapyrocatechase (pheB) from Geobacillus stearothermophilus (Bacillus stearothermophilus).